The sequence spans 103 residues: Large ribosomal subunit protein bL21 (103 aa).

Belongs to the bacterial ribosomal protein bL21 family. In terms of assembly, part of the 50S ribosomal subunit. Contacts protein L20.

Functionally, this protein binds to 23S rRNA in the presence of protein L20. This is Large ribosomal subunit protein bL21 from Marinobacter nauticus (strain ATCC 700491 / DSM 11845 / VT8) (Marinobacter aquaeolei).